We begin with the raw amino-acid sequence, 174 residues long: Large ribosomal subunit protein uL10 (174 aa).

It belongs to the universal ribosomal protein uL10 family. In terms of assembly, part of the ribosomal stalk of the 50S ribosomal subunit. The N-terminus interacts with L11 and the large rRNA to form the base of the stalk. The C-terminus forms an elongated spine to which L12 dimers bind in a sequential fashion forming a multimeric L10(L12)X complex.

In terms of biological role, forms part of the ribosomal stalk, playing a central role in the interaction of the ribosome with GTP-bound translation factors. This chain is Large ribosomal subunit protein uL10, found in Methylobacillus flagellatus (strain ATCC 51484 / DSM 6875 / VKM B-1610 / KT).